The primary structure comprises 137 residues: Nucleoside diphosphate kinase (137 aa).

Positions 9, 57, 85, 91, 102, and 112 each coordinate ATP. The active-site Pros-phosphohistidine intermediate is histidine 115.

Belongs to the NDK family. As to quaternary structure, homotetramer. Requires Mg(2+) as cofactor.

Its subcellular location is the cytoplasm. The enzyme catalyses a 2'-deoxyribonucleoside 5'-diphosphate + ATP = a 2'-deoxyribonucleoside 5'-triphosphate + ADP. It carries out the reaction a ribonucleoside 5'-diphosphate + ATP = a ribonucleoside 5'-triphosphate + ADP. Functionally, major role in the synthesis of nucleoside triphosphates other than ATP. The ATP gamma phosphate is transferred to the NDP beta phosphate via a ping-pong mechanism, using a phosphorylated active-site intermediate. The polypeptide is Nucleoside diphosphate kinase (Helicobacter hepaticus (strain ATCC 51449 / 3B1)).